A 533-amino-acid polypeptide reads, in one-letter code: MSTTTLDAAVIGTGVAGLYELHMLREQGLEVRAYDKASGVGGTWYWNRYPGARFDSEAYIYQYLFDEDLYKGWSWSQRFPGQEEIERWLNYVADSLDLRRDISLETEITSAVFDEDRNRWTLTTADGDTIDAQFLITCCGMLSAPMKDLFPGQSDFGGQLVHTARWPKEGIDFAGKRVGVIGNGATGIQVIQSIAADVDELKVFIRTPQYALPMKNPSYGPDEVAWYKSRFGELKDTLPHTFTGFEYDFTDAWEDLTPEQRRARLEDDYENGSLKLWLASFAEIFSDEQVSEEVSEFVREKMRARLVDPELCDLLIPSDYGFGTHRVPLETNYLEVYHRDNVTAVLVRDNPITRIRENGIELADGTVHELDVIIMATGFDAGTGALTRIDIRGRDGRTLADDWSRDIRTTMGLMVHGYPNMLTTAVPLAPSAALCNMTTCLQQQTEWISEAIRHLRATGKTVIEPTAEGEEAWVAHHDELADANLISKTNSWYVGSNVPGKPRRVLSYVGGVGAYRDATLEAAAAGYKGFALS.

FAD is bound by residues 43 to 46, 55 to 56, and Tyr-61; these read TWYW and DS. NADP(+) is bound at residue 53 to 55; it reads RFD. Residues 183 to 189, 206 to 207, and Trp-492 each bind NADP(+); these read NGATGIQ and RT.

Belongs to the FAD-binding monooxygenase family. In terms of assembly, homotetramer. The cofactor is FAD.

It carries out the reaction acetone + NADPH + O2 + H(+) = methyl acetate + NADP(+) + H2O. Functionally, plays an important role in the metabolism of acetone derived from propane oxidation. Catalyzes the oxidation of acetone to methyl acetate. Exhibits high catalytic efficiency towards various linear and cyclic ketones, such as butanone, 2-pentanone, 2-heptanone, 2-octanone, 2-nonanone, 2-decanone, cyclobutanone, cyclopentanone and cyclohexanone. Elicits the highest catalytic efficiency towards butanone and cyclobutanone. Is highly specific for NADPH and cannot use NADH. The chain is Acetone monooxygenase (methyl acetate-forming) from Gordonia sp. (strain TY-5).